Reading from the N-terminus, the 447-residue chain is Transcription factor azf1 (447 aa).

2 disordered regions span residues 125 to 155 and 174 to 199; these read HNGA…NEVE and QSPG…PQSY. Residues 127 to 139 are compositionally biased toward low complexity; the sequence is GASQQPPGAQSSS. Residues 140-155 show a composition bias toward polar residues; it reads NEEGAQGKSSSSNEVE. C2H2-type zinc fingers lie at residues 225–249, 255–279, 285–307, and 313–338; these read YACT…MRAH, FVCK…QRRH, FSCD…KITH, and FTCL…NKFH. The tract at residues 377 to 447 is disordered; the sequence is NKGIKGRGKD…EPYFIERQAH (71 aa). A compositionally biased stretch (basic and acidic residues) spans 397–416; it reads PGSESRRRIEPLSSTDDKMR. Polar residues predominate over residues 421-431; that stretch reads GDTSMYNGGSS.

It is found in the nucleus. In terms of biological role, transcription factor that acts as a positive regulator of ochratoxin A (OTA) biosynthesis via controlling the expression of antioxidant genes and oxidative phosphorylation genes. The polypeptide is Transcription factor azf1 (Aspergillus niger (strain ATCC MYA-4892 / CBS 513.88 / FGSC A1513)).